The following is a 338-amino-acid chain: MADWYQLAQSIIFGLIFAYLLAKLISILLAFKDENLSLTRNHTTQSEYENLRKVETLTGISGETDSLIAEQGSLRGDEDESDDDDWEGVESTELDEAFSAATAFVAAAASDRLSQKVSNELQLQLYGLYKIATEGPCTAPQPSALKMTARAKWQAWQKLGAMPPEEAMEKYIDLVTQLYPAWVEGGSKRRNRSGEAAGPMGPVFSSLVYEEESDNELKIDAIHAFAREGEVENLLKCIENGIPVNARDSEGRTPLHWAIDRGHLNVAEALVDKNADVNAKDNEGQTSLHYAVVCEREALAEFLVKQKADTTIKDEDGNSPLDLCESEWSWMREKKDSN.

The helical; Signal-anchor transmembrane segment at 11–31 (IIFGLIFAYLLAKLISILLAF) threads the bilayer. Asparagine 35 and asparagine 41 each carry an N-linked (GlcNAc...) asparagine glycan. Residues 69-89 (AEQGSLRGDEDESDDDDWEGV) form a disordered region. Residues 77–89 (DEDESDDDDWEGV) are compositionally biased toward acidic residues. One can recognise an ACB domain in the interval 94–184 (LDEAFSAATA…VTQLYPAWVE (91 aa)). An acyl-CoA-binding positions include 126–130 (YGLYK), lysine 152, and tyrosine 171. N-linked (GlcNAc...) asparagine glycosylation occurs at asparagine 191. ANK repeat units follow at residues 217–246 (LKID…PVNA), 250–279 (EGRT…DVNA), 283–312 (EGQT…DTTI), and 316–338 (DGNS…KDSN).

It belongs to the ACBP family. As to quaternary structure, interacts with RAP2-12. Binds to SMO1-1 and SMO1-2. In terms of processing, glycosylated. In seeds, localized in the outer integument. In terms of tissue distribution, expressed at low levels in roots, stems, leaves, flowers, and siliques, especially within seeds.

It is found in the cell membrane. It localises to the secreted. The protein resides in the cell wall. The protein localises to the endoplasmic reticulum membrane. Functionally, binds medium- and long-chain acyl-CoA esters with very high affinity. Can interact in vitro with arachidonyl-CoA, barely with oleoyl-CoA, but not with palmitoyl-CoA. Confers tolerance and binds to lead ions Pb(2+), probably by promoting lead translocation from roots to shoots. May function as an intracellular carrier of acyl-CoA esters. Modulates negatively sterol synthesis during embryogenesis and gametophytes development via interactions with SMO1-1 and SMO1-2; sterols serve as lipid modulators for gene expression of homeodomain-leucine zipper IV transcription factors. The sequence is that of Acyl-CoA-binding domain-containing protein 1 from Arabidopsis thaliana (Mouse-ear cress).